The primary structure comprises 345 residues: NADPH dehydrogenase (345 aa).

23 to 26 (SPMC) provides a ligand contact to FMN. Substrate is bound at residue Tyr-28. Residues Ala-60 and Gln-102 each contribute to the FMN site. Residue 164 to 167 (HGAH) participates in substrate binding. FMN-binding positions include Arg-215 and 307–308 (GR).

This sequence belongs to the NADH:flavin oxidoreductase/NADH oxidase family. NamA subfamily. As to quaternary structure, homotetramer. Requires FMN as cofactor.

It catalyses the reaction A + NADPH + H(+) = AH2 + NADP(+). In terms of biological role, catalyzes the reduction of the double bond of an array of alpha,beta-unsaturated aldehydes and ketones. It also reduces the nitro group of nitroester and nitroaromatic compounds. It could have a role in detoxification processes. The protein is NADPH dehydrogenase of Bacillus cereus (strain ATCC 10987 / NRS 248).